The primary structure comprises 556 residues: Protein F37C4.5 (556 aa).

N-acetylalanine is present on Ala-2.

The chain is Protein F37C4.5 from Caenorhabditis elegans.